The primary structure comprises 612 residues: Dihydroxy-acid dehydratase (612 aa).

Asp81 contributes to the Mg(2+) binding site. Residue Cys122 participates in [2Fe-2S] cluster binding. The Mg(2+) site is built by Asp123 and Lys124. The residue at position 124 (Lys124) is an N6-carboxylysine. A [2Fe-2S] cluster-binding site is contributed by Cys193. Position 489 (Glu489) interacts with Mg(2+). Ser515 functions as the Proton acceptor in the catalytic mechanism.

The protein belongs to the IlvD/Edd family. In terms of assembly, homodimer. It depends on [2Fe-2S] cluster as a cofactor. Requires Mg(2+) as cofactor.

It carries out the reaction (2R)-2,3-dihydroxy-3-methylbutanoate = 3-methyl-2-oxobutanoate + H2O. It catalyses the reaction (2R,3R)-2,3-dihydroxy-3-methylpentanoate = (S)-3-methyl-2-oxopentanoate + H2O. It participates in amino-acid biosynthesis; L-isoleucine biosynthesis; L-isoleucine from 2-oxobutanoate: step 3/4. Its pathway is amino-acid biosynthesis; L-valine biosynthesis; L-valine from pyruvate: step 3/4. Its function is as follows. Functions in the biosynthesis of branched-chain amino acids. Catalyzes the dehydration of (2R,3R)-2,3-dihydroxy-3-methylpentanoate (2,3-dihydroxy-3-methylvalerate) into 2-oxo-3-methylpentanoate (2-oxo-3-methylvalerate) and of (2R)-2,3-dihydroxy-3-methylbutanoate (2,3-dihydroxyisovalerate) into 2-oxo-3-methylbutanoate (2-oxoisovalerate), the penultimate precursor to L-isoleucine and L-valine, respectively. The polypeptide is Dihydroxy-acid dehydratase (Xanthomonas euvesicatoria pv. vesicatoria (strain 85-10) (Xanthomonas campestris pv. vesicatoria)).